We begin with the raw amino-acid sequence, 471 residues long: UDP-glycosyltransferase CGT (471 aa).

Catalysis depends on H24, which acts as the Proton acceptor. Position 24 (H24) interacts with an anthocyanidin. The Charge relay role is filled by D120. T143 is a binding site for UDP-alpha-D-glucose. A UDP region spans residues S280–R281. UDP-alpha-D-glucose contacts are provided by V343, Q345, H360, W363, N364, S365, and E368. G383 contributes to the an anthocyanidin binding site. UDP-alpha-D-glucose-binding residues include D384 and Q385.

Belongs to the UDP-glycosyltransferase family.

The enzyme catalyses a 3'-hydro-2'-hydroxy-beta-oxodihydrochalcone + UDP-alpha-D-glucose = a 3'-(beta-D-glucopyranosyl)-2'-hydroxy-beta-oxodihydrochalcone + UDP + H(+). Functionally, UDP-glucose-dependent glucosyltransferase catalyzing the c-glucosylation of 2-hydroxyflavanones. The protein is UDP-glycosyltransferase CGT of Oryza sativa subsp. japonica (Rice).